The primary structure comprises 517 residues: Ubiquitin carboxyl-terminal hydrolase 30 (517 aa).

Residues 1–35 (MLSSRAQAARTAADKALQRFLRTGAAVRYKVMKNW) are Mitochondrial intermembrane-facing. A helical membrane pass occupies residues 36-56 (GVIGGIAAALAAGIYVIWGPI). The Cytoplasmic segment spans residues 57–517 (TERKKRRKGL…QQGREYRSEE (461 aa)). Residues 68–502 (PGLVNLGNTC…SAYLLFYERV (435 aa)) form the USP domain. Cys77 acts as the Nucleophile in catalysis. A disordered region spans residues 198–221 (MAPRQVTCHTRGSPHPTTNHWKSQ). The span at 204–218 (TCHTRGSPHPTTNHW) shows a compositional bias: polar residues. Residues Lys235 and Lys289 each participate in a glycyl lysine isopeptide (Lys-Gly) (interchain with G-Cter in ubiquitin) cross-link. Residues 364–395 (SQHGPKATENPGSAPEVQDAQAAPKPGLSQPG) form a disordered region. The Proton acceptor role is filled by His452.

It belongs to the peptidase C19 family. Ubiquitinated by parkin (PRKN) at Lys-235 and Lys-289, leading to its degradation.

The protein localises to the mitochondrion outer membrane. It catalyses the reaction Thiol-dependent hydrolysis of ester, thioester, amide, peptide and isopeptide bonds formed by the C-terminal Gly of ubiquitin (a 76-residue protein attached to proteins as an intracellular targeting signal).. With respect to regulation, inhibited by the diterpenoid derivative 15-oxospiramilactone (S3). Its function is as follows. Deubiquitinating enzyme tethered to the mitochondrial outer membrane that acts as a key inhibitor of mitophagy by counteracting the action of parkin (PRKN): hydrolyzes ubiquitin attached by parkin on target proteins, such as RHOT1/MIRO1 and TOMM20, thereby blocking parkin's ability to drive mitophagy. Preferentially cleaves 'Lys-6'- and 'Lys-11'-linked polyubiquitin chains, 2 types of linkage that participate in mitophagic signaling. Does not cleave efficiently polyubiquitin phosphorylated at 'Ser-65'. Acts as negative regulator of mitochondrial fusion by mediating deubiquitination of MFN1 and MFN2. This is Ubiquitin carboxyl-terminal hydrolase 30 (Usp30) from Mus musculus (Mouse).